An 89-amino-acid chain; its full sequence is NAD(P)H-quinone oxidoreductase subunit L (89 aa).

A run of 2 helical transmembrane segments spans residues 29-46 (VLGG…FYWM) and 59-79 (LFIY…APFL).

Belongs to the complex I NdhL subunit family. In terms of assembly, NDH-1 can be composed of about 15 different subunits; different subcomplexes with different compositions have been identified which probably have different functions.

Its subcellular location is the cellular thylakoid membrane. The enzyme catalyses a plastoquinone + NADH + (n+1) H(+)(in) = a plastoquinol + NAD(+) + n H(+)(out). It catalyses the reaction a plastoquinone + NADPH + (n+1) H(+)(in) = a plastoquinol + NADP(+) + n H(+)(out). In terms of biological role, NDH-1 shuttles electrons from an unknown electron donor, via FMN and iron-sulfur (Fe-S) centers, to quinones in the respiratory and/or the photosynthetic chain. The immediate electron acceptor for the enzyme in this species is believed to be plastoquinone. Couples the redox reaction to proton translocation, and thus conserves the redox energy in a proton gradient. Cyanobacterial NDH-1 also plays a role in inorganic carbon-concentration. This chain is NAD(P)H-quinone oxidoreductase subunit L, found in Prochlorococcus marinus (strain NATL1A).